Consider the following 144-residue polypeptide: Large ribosomal subunit protein uL11 (144 aa).

It belongs to the universal ribosomal protein uL11 family. As to quaternary structure, part of the ribosomal stalk of the 50S ribosomal subunit. Interacts with L10 and the large rRNA to form the base of the stalk. L10 forms an elongated spine to which L12 dimers bind in a sequential fashion forming a multimeric L10(L12)X complex. One or more lysine residues are methylated.

Its function is as follows. Forms part of the ribosomal stalk which helps the ribosome interact with GTP-bound translation factors. The sequence is that of Large ribosomal subunit protein uL11 from Deinococcus geothermalis (strain DSM 11300 / CIP 105573 / AG-3a).